The primary structure comprises 239 residues: Ribonuclease 3 (239 aa).

Residues 11–133 (HAAIQKKLGY…MFAAVSFDAD (123 aa)) enclose the RNase III domain. Glutamate 46 contacts Mg(2+). Aspartate 50 is a catalytic residue. The Mg(2+) site is built by aspartate 119 and glutamate 122. Positions 160-230 (DGKTALQEAL…AKEALKWLEE (71 aa)) constitute a DRBM domain.

The protein belongs to the ribonuclease III family. In terms of assembly, homodimer. Mg(2+) is required as a cofactor.

The protein resides in the cytoplasm. The enzyme catalyses Endonucleolytic cleavage to 5'-phosphomonoester.. Its function is as follows. Digests double-stranded RNA. Involved in the processing of primary rRNA transcript to yield the immediate precursors to the large and small rRNAs (23S and 16S). Also processes some mRNAs, and tRNAs when they are encoded in the rRNA operon. Functionally, CRISPR (clustered regularly interspaced short palindromic repeat) is an adaptive immune system that provides protection against mobile genetic elements (viruses, transposable elements and conjugative plasmids). CRISPR clusters contain spacers, sequences complementary to antecedent mobile elements, and target invading nucleic acids. CRISPR clusters are transcribed and processed into CRISPR RNA (crRNA). In this organism endogenous ribonuclease 3 and Cas9 are required for correct coprocessing of pre-crRNA and the trans-encoded small RNA (tracrRNA). Cas9, crRNA and tracRNA are required for cleavage of invading DNA. Involved in 3'-end processing but not 5'-end processing of crRNA and tracrRNA. This Neisseria meningitidis serogroup C (strain 8013) protein is Ribonuclease 3.